The chain runs to 444 residues: 23S rRNA (uracil(1939)-C(5))-methyltransferase RlmD (444 aa).

Residues 5-67 (RNRFDRTPFQ…RHFDEAKTVE (63 aa)) form the TRAM domain. The [4Fe-4S] cluster site is built by cysteine 80, cysteine 86, cysteine 89, and cysteine 168. Residues glutamine 276, phenylalanine 305, asparagine 310, glutamate 326, aspartate 353, and aspartate 374 each contribute to the S-adenosyl-L-methionine site. The active-site Nucleophile is cysteine 400.

It belongs to the class I-like SAM-binding methyltransferase superfamily. RNA M5U methyltransferase family. RlmD subfamily.

It catalyses the reaction uridine(1939) in 23S rRNA + S-adenosyl-L-methionine = 5-methyluridine(1939) in 23S rRNA + S-adenosyl-L-homocysteine + H(+). Functionally, catalyzes the formation of 5-methyl-uridine at position 1939 (m5U1939) in 23S rRNA. The protein is 23S rRNA (uracil(1939)-C(5))-methyltransferase RlmD of Xanthomonas oryzae pv. oryzae (strain MAFF 311018).